The chain runs to 513 residues: ATP synthase subunit alpha 1 (513 aa).

Residue Gly169–Thr176 coordinates ATP.

The protein belongs to the ATPase alpha/beta chains family. As to quaternary structure, F-type ATPases have 2 components, CF(1) - the catalytic core - and CF(0) - the membrane proton channel. CF(1) has five subunits: alpha(3), beta(3), gamma(1), delta(1), epsilon(1). CF(0) has three main subunits: a(1), b(2) and c(9-12). The alpha and beta chains form an alternating ring which encloses part of the gamma chain. CF(1) is attached to CF(0) by a central stalk formed by the gamma and epsilon chains, while a peripheral stalk is formed by the delta and b chains.

It is found in the cell inner membrane. It catalyses the reaction ATP + H2O + 4 H(+)(in) = ADP + phosphate + 5 H(+)(out). Functionally, produces ATP from ADP in the presence of a proton gradient across the membrane. The alpha chain is a regulatory subunit. This is ATP synthase subunit alpha 1 from Burkholderia pseudomallei (strain 1710b).